The following is a 509-amino-acid chain: Histidine ammonia-lyase (509 aa).

Positions A144–G146 form a cross-link, 5-imidazolinone (Ala-Gly). The residue at position 145 (S145) is a 2,3-didehydroalanine (Ser).

Belongs to the PAL/histidase family. Post-translationally, contains an active site 4-methylidene-imidazol-5-one (MIO), which is formed autocatalytically by cyclization and dehydration of residues Ala-Ser-Gly.

It is found in the cytoplasm. It carries out the reaction L-histidine = trans-urocanate + NH4(+). It functions in the pathway amino-acid degradation; L-histidine degradation into L-glutamate; N-formimidoyl-L-glutamate from L-histidine: step 1/3. In Rhodospirillum centenum (strain ATCC 51521 / SW), this protein is Histidine ammonia-lyase.